A 389-amino-acid polypeptide reads, in one-letter code: Chalcone synthase 2 (389 aa).

55-62 contributes to the CoA binding site; sequence KFQRMCDK. The Acyl-thioester intermediate role is filled by cysteine 164. Residues threonine 197 and 216 to 217 each bind substrate; that span reads GD. Alanine 308 provides a ligand contact to CoA.

It belongs to the thiolase-like superfamily. Chalcone/stilbene synthases family. As to quaternary structure, homodimer.

It catalyses the reaction (E)-4-coumaroyl-CoA + 3 malonyl-CoA + 3 H(+) = 2',4,4',6'-tetrahydroxychalcone + 3 CO2 + 4 CoA. It functions in the pathway secondary metabolite biosynthesis; flavonoid biosynthesis. Functionally, the primary product of this enzyme is 4,2',4',6'-tetrahydroxychalcone (also termed naringenin-chalcone or chalcone) which can under specific conditions spontaneously isomerize into naringenin. The polypeptide is Chalcone synthase 2 (CHS2) (Medicago sativa (Alfalfa)).